We begin with the raw amino-acid sequence, 77 residues long: Cold shock protein YdfK (77 aa).

The protein to E.coli YnaE.

This chain is Cold shock protein YdfK (ydfK), found in Escherichia coli (strain K12).